We begin with the raw amino-acid sequence, 308 residues long: Olfactory receptor 5K1 (308 aa).

Residues 1–25 (MAEENHTMKNEFILTGFTDHPELKT) lie on the Extracellular side of the membrane. An N-linked (GlcNAc...) asparagine glycan is attached at N5. Residues 26-46 (LLFVVFFAIYLITVVGNISLV) form a helical membrane-spanning segment. The Cytoplasmic portion of the chain corresponds to 47 to 54 (ALIFTHRR). Residues 55 to 75 (LHTPMYIFLGNLALVDSCCAC) form a helical membrane-spanning segment. At 76-99 (AITPKMLENFFSENKRISLYECAV) the chain is on the extracellular side. Residues C97 and C189 are joined by a disulfide bond. A helical transmembrane segment spans residues 100-120 (QFYFLCTVETADCFLLAAMAY). At 121 to 139 (DRYVAICNPLQYHIMMSKK) the chain is on the cytoplasmic side. A helical transmembrane segment spans residues 140-160 (LCIQMTTGAFIAGNLHSMIHV). Over 161–196 (GLVFRLVFCGSNHINHFYCDILPLYRLSCVDPYINE) the chain is Extracellular. The chain crosses the membrane as a helical span at residues 197 to 217 (LVLFIFSGSVQVFTIGSVLIS). Over 218-237 (YLYILLTIFKMKSKEGRAKA) the chain is Cytoplasmic. Residues 238–258 (FSTCASHFLSVSLFYGSLFFM) traverse the membrane as a helical segment. The Extracellular segment spans residues 259-271 (YVRPNLLEEGDKD). Residues 272 to 292 (IPAAILFTIVVPLLNPFIYSL) traverse the membrane as a helical segment. Topologically, residues 293–308 (RNREVISVLRKILMKK) are cytoplasmic.

It belongs to the G-protein coupled receptor 1 family.

Its subcellular location is the cell membrane. Functionally, odorant receptor. In Homo sapiens (Human), this protein is Olfactory receptor 5K1 (OR5K1).